The primary structure comprises 510 residues: ATP synthase subunit alpha (510 aa).

169-176 (GDRQTGKT) is a binding site for ATP.

The protein belongs to the ATPase alpha/beta chains family. F-type ATPases have 2 components, CF(1) - the catalytic core - and CF(0) - the membrane proton channel. CF(1) has five subunits: alpha(3), beta(3), gamma(1), delta(1), epsilon(1). CF(0) has three main subunits: a(1), b(2) and c(9-12). The alpha and beta chains form an alternating ring which encloses part of the gamma chain. CF(1) is attached to CF(0) by a central stalk formed by the gamma and epsilon chains, while a peripheral stalk is formed by the delta and b chains.

It is found in the cell inner membrane. It carries out the reaction ATP + H2O + 4 H(+)(in) = ADP + phosphate + 5 H(+)(out). Its function is as follows. Produces ATP from ADP in the presence of a proton gradient across the membrane. The alpha chain is a regulatory subunit. The sequence is that of ATP synthase subunit alpha from Anaeromyxobacter sp. (strain K).